A 212-amino-acid chain; its full sequence is Translation initiation factor IF-3 (212 aa).

A compositionally biased stretch (basic and acidic residues) spans 190–203 (LVDKNSDSQDKSVS). A disordered region spans residues 190 to 212 (LVDKNSDSQDKSVSEEDTNEGEQ).

The protein belongs to the IF-3 family. Monomer.

It localises to the cytoplasm. Its function is as follows. IF-3 binds to the 30S ribosomal subunit and shifts the equilibrium between 70S ribosomes and their 50S and 30S subunits in favor of the free subunits, thus enhancing the availability of 30S subunits on which protein synthesis initiation begins. The protein is Translation initiation factor IF-3 of Mycoplasmopsis fermentans (Mycoplasma fermentans).